A 158-amino-acid chain; its full sequence is Egg cell-secreted protein 1.1 (158 aa).

Residues 1 to 27 (MASKSSFMATFNIVTLMLMVASSTVTA) form the signal peptide. N-linked (GlcNAc...) asparagine glycosylation is present at Asn122.

Belongs to the plant egg cell-secreted peptide family. In terms of tissue distribution, restricted to female reproductive tissues, specifically accumulating in storage vesicles of the unfertilized egg cell.

The protein localises to the cytoplasmic vesicle. The protein resides in the secreted. Functionally, involved in the regulation of gamete interactions during the double fertilization and to prevent multiple-pollen tube attraction; mediates the redistribution of the gamete fusogen HAP2/GCS1 to the cell surface after secretion upon sperm arrival. In Arabidopsis thaliana (Mouse-ear cress), this protein is Egg cell-secreted protein 1.1 (EC1.1).